Consider the following 261-residue polypeptide: CD40 ligand (261 aa).

Topologically, residues 1–22 (MVETYHQPAPRSAATGLPVSMK) are cytoplasmic. Residues 23–43 (IFMYLLTVFLITQMIGSALFA) traverse the membrane as a helical; Signal-anchor for type II membrane protein segment. Over 44–261 (VYLHRRLDKI…GFTSFGLLKL (218 aa)) the chain is Extracellular. Positions 122-261 (IAAHVISEAS…GFTSFGLLKL (140 aa)) constitute a THD domain. Residues Cys178 and Cys218 are joined by a disulfide bond. Residue Asn240 is glycosylated (N-linked (GlcNAc...) asparagine).

Belongs to the tumor necrosis factor family. As to quaternary structure, homotrimer. Interacts with CD28. CD40 ligand, soluble form: Exists as either a monomer or a homotrimer. Forms a ternary complex between CD40 and integrins for CD40-CD40LG signaling. In terms of processing, the soluble form derives from the membrane form by proteolytic processing.

The protein resides in the cell membrane. The protein localises to the cell surface. It is found in the secreted. Cytokine that acts as a ligand to CD40/TNFRSF5. Costimulates T-cell proliferation and cytokine production. Its cross-linking on T-cells generates a costimulatory signal which enhances the production of IL4 and IL10 in conjunction with the TCR/CD3 ligation and CD28 costimulation. Induces the activation of NF-kappa-B. Induces the activation of kinases MAPK8 and PAK2 in T-cells. Mediates B-cell proliferation in the absence of co-stimulus as well as IgE production in the presence of IL4. Involved in immunoglobulin class switching. Its function is as follows. Acts as a ligand for integrins, specifically ITGA5:ITGB1 and ITGAV:ITGB3; both integrins and the CD40 receptor are required for activation of CD40-CD40LG signaling, which have cell-type dependent effects, such as B-cell activation, NF-kappa-B signaling and anti-apoptotic signaling. This Aotus trivirgatus (Three-striped night monkey) protein is CD40 ligand (CD40LG).